The sequence spans 325 residues: Lactonase drp35 (325 aa).

Residues Glu46, Thr108, Gly110, Asp128, Thr131, Tyr133, Asp136, Asn183, Asp234, and Ser235 each coordinate Ca(2+). Asp234 acts as the Proton donor in catalysis.

This sequence belongs to the SMP-30/CGR1 family. The cofactor is Ca(2+).

The protein localises to the cytoplasm. Its function is as follows. Exhibits lactonase activity. Acts in cells with perturbed membrane integrity and is possibly related to the membrane homeostasis. The chain is Lactonase drp35 (drp35) from Staphylococcus epidermidis (strain ATCC 12228 / FDA PCI 1200).